The chain runs to 521 residues: Bifunctional purine biosynthesis protein PurH (521 aa).

The MGS-like domain maps to 1–145 (MIKQALISVS…KNHRDVTVVV (145 aa)).

It belongs to the PurH family.

The enzyme catalyses (6R)-10-formyltetrahydrofolate + 5-amino-1-(5-phospho-beta-D-ribosyl)imidazole-4-carboxamide = 5-formamido-1-(5-phospho-D-ribosyl)imidazole-4-carboxamide + (6S)-5,6,7,8-tetrahydrofolate. It catalyses the reaction IMP + H2O = 5-formamido-1-(5-phospho-D-ribosyl)imidazole-4-carboxamide. It participates in purine metabolism; IMP biosynthesis via de novo pathway; 5-formamido-1-(5-phospho-D-ribosyl)imidazole-4-carboxamide from 5-amino-1-(5-phospho-D-ribosyl)imidazole-4-carboxamide (10-formyl THF route): step 1/1. It functions in the pathway purine metabolism; IMP biosynthesis via de novo pathway; IMP from 5-formamido-1-(5-phospho-D-ribosyl)imidazole-4-carboxamide: step 1/1. The chain is Bifunctional purine biosynthesis protein PurH from Burkholderia orbicola (strain AU 1054).